We begin with the raw amino-acid sequence, 161 residues long: Large ribosomal subunit protein eL21 (161 aa).

It belongs to the eukaryotic ribosomal protein eL21 family.

This is Large ribosomal subunit protein eL21 (RPL21) from Cyanophora paradoxa.